The following is a 145-amino-acid chain: Large ribosomal subunit protein uL11 (145 aa).

Belongs to the universal ribosomal protein uL11 family. As to quaternary structure, part of the ribosomal stalk of the 50S ribosomal subunit. Interacts with L10 and the large rRNA to form the base of the stalk. L10 forms an elongated spine to which L12 dimers bind in a sequential fashion forming a multimeric L10(L12)X complex. In terms of processing, one or more lysine residues are methylated.

In terms of biological role, forms part of the ribosomal stalk which helps the ribosome interact with GTP-bound translation factors. This is Large ribosomal subunit protein uL11 from Aquifex aeolicus (strain VF5).